A 181-amino-acid chain; its full sequence is uncharacterized protein (181 aa).

The next 4 helical transmembrane spans lie at 3 to 23 (LSQT…VLIL), 67 to 87 (ALLL…GLSV), 92 to 112 (VLGV…VLFI), and 159 to 179 (MFIL…LWII).

Belongs to the YggT family.

The protein resides in the cell membrane. This is an uncharacterized protein from Haemophilus influenzae (strain ATCC 51907 / DSM 11121 / KW20 / Rd).